A 487-amino-acid chain; its full sequence is Cysteine--tRNA ligase (487 aa).

C30 contributes to the Zn(2+) binding site. The 'HIGH' region motif lies at 32–42; the sequence is PTVYGHAHLGH. C226, H251, and E255 together coordinate Zn(2+). Positions 283-287 match the 'KMSKS' region motif; that stretch reads KMGKS. K286 provides a ligand contact to ATP.

It belongs to the class-I aminoacyl-tRNA synthetase family. As to quaternary structure, monomer. Zn(2+) is required as a cofactor.

It is found in the cytoplasm. It carries out the reaction tRNA(Cys) + L-cysteine + ATP = L-cysteinyl-tRNA(Cys) + AMP + diphosphate. The protein is Cysteine--tRNA ligase (cysS) of Chlorobaculum tepidum (strain ATCC 49652 / DSM 12025 / NBRC 103806 / TLS) (Chlorobium tepidum).